The following is a 1015-amino-acid chain: SPOC domain-containing protein 1 (1015 aa).

Disordered stretches follow at residues 73–97 (MVSPEDPTLSKEGLSAKGPPPSPVL), 118–159 (GFSL…EPGG), 213–320 (LYPE…PRLE), and 344–406 (AASS…MTPL). A compositionally biased stretch (basic and acidic residues) spans 304 to 320 (SQDHAEGASKKDFPRLE). The span at 373–382 (AHPTPCQSDP) shows a compositional bias: polar residues. Positions 388 to 397 (AEPHQQRAED) are enriched in basic and acidic residues. The 121-residue stretch at 410 to 530 (VRSTVVRAMQ…IIEQQQKELY (121 aa)) folds into the TFIIS central domain. The disordered stretch occupies residues 643–685 (IQKAPGPAPASSPEVLKVGETPPKEPQDRLQMPAGLKNAPPSP). The region spanning 688-791 (WEGSLDMFSI…VQQVKMVLLP (104 aa)) is the SPOC domain. Disordered regions lie at residues 858 to 906 (PEDR…PGWG) and 967 to 1015 (QSQD…EHEC). Residues 967–978 (QSQDSLPPSTVV) show a composition bias toward polar residues.

As to quaternary structure, interacts with DNMT3A, DNMT3C and DNMT3L. Interacts with C19orf84 homolog. Interacts with SPIN1; promoting recruitment to transposons marked with histone H3 trimethylated at both 'Lys-4' and 'Lys-9' (H3K4me3K9me3).

It localises to the nucleus. Its subcellular location is the chromosome. Protein adapter that acts as an essential executor of PIWIL4-piRNA pathway directed transposon DNA methylation and silencing in the male embryonic germ cells. Recruited to young transposons, which are specifically marked with histone H3 trimethylated at both 'Lys-4' and 'Lys-9' (H3K4me3K9me3), via its association with SPIN1 chromatin reader, and associates with the de novo DNA methylation machinery and repressive chromatin remodeling complexes. Following this, PIWIL4 engages with nascent transposable element transcript to direct piRNA-directed DNA methylation. Not required for piRNA biosynthesis. This is SPOC domain-containing protein 1 from Mus musculus (Mouse).